The sequence spans 517 residues: Superoxide-generating NADPH oxidase heavy chain subunit A (517 aa).

Residues 1 to 19 (MRLPTKEEIQRYWVNEGNK) lie on the Cytoplasmic side of the membrane. The helical transmembrane segment at 20–40 (LILVILYTLGNIAAFVYTFVH) threads the bilayer. The Extracellular segment spans residues 41–62 (YYNSPAFEVVGYGVCFARGCAQ). Residues 58 to 201 (RGCAQLLKLN…LFVVFFGLLV (144 aa)) enclose the Ferric oxidoreductase domain. The helical transmembrane segment at 63-83 (LLKLNCALILVPVLRNLLSFL) threads the bilayer. The Cytoplasmic segment spans residues 84–97 (RGTFLNNYVPFDKN). Residues 98 to 118 (IVFHKLIAWVICFATFGHVMA) form a helical membrane-spanning segment. H101 and H115 together coordinate heme. Over 119–149 (HFNNFRLYQDITPQEYKRILGIDYPNLTPIK) the chain is Extracellular. Residues 150 to 170 (YAFATLAGWTGHVVCIVMVLM) traverse the membrane as a helical segment. At 171–184 (YTSAVESIRRPMFE) the chain is on the cytoplasmic side. The chain crosses the membrane as a helical span at residues 185-205 (GFWYTHHLFVVFFGLLVVHGL). H190 and H203 together coordinate heme. Residue H206 is a topological domain, extracellular. Residues 207–227 (SILEPTSFWKWVIGPCALYIV) traverse the membrane as a helical segment. At 228–517 (ERLIRLLRSK…CRFHYNKENF (290 aa)) the chain is on the cytoplasmic side. One can recognise an FAD-binding FR-type domain in the interval 229–349 (RLIRLLRSKK…DGPFGAASEE (121 aa)). FAD is bound at residue 283–289 (HPFTITS).

As to quaternary structure, composed of a heavy chain and a light chain. The cofactor is FAD.

It is found in the membrane. Its function is as follows. Critical component of the membrane-bound oxidase that generates superoxide. It is the terminal component of a respiratory chain that transfers single electrons from cytoplasmic NADPH across the plasma membrane to molecular oxygen on the exterior. The sequence is that of Superoxide-generating NADPH oxidase heavy chain subunit A (noxA) from Dictyostelium discoideum (Social amoeba).